Consider the following 1434-residue polypeptide: Protein patched homolog 1 (1434 aa).

Residues 1-13 (MASAGNAAGALGR) show a composition bias toward low complexity. The disordered stretch occupies residues 1 to 34 (MASAGNAAGALGRQAGGGRRRRTGGPHRAAPDRD). At 1–86 (MASAGNAAGA…GCYIQKNCGK (86 aa)) the chain is on the cytoplasmic side. The chain crosses the membrane as a helical span at residues 87 to 107 (FLVVGLLIFGAFAVGLKAANL). At 108-422 (ETNVEELWVE…LDDILKSFSD (315 aa)) the chain is on the extracellular side. Asn-127, Asn-298, Asn-335, and Asn-400 each carry an N-linked (GlcNAc...) asparagine glycan. A helical transmembrane segment spans residues 423-443 (VSVIRVASGYLLMLAYACLTM). One can recognise an SSD domain in the interval 424-584 (SVIRVASGYL…LLIFPAILSM (161 aa)). The Cytoplasmic segment spans residues 444-458 (LRWDCSKSQGAVGLA). A helical membrane pass occupies residues 459–479 (GVLLVALSVAAGLGLCSLIGI). Over 480-487 (SFNAATTQ) the chain is Extracellular. The chain crosses the membrane as a helical span at residues 488–508 (VLPFLALGVGVDDVFLLAHAF). Over 509–533 (SETGQNKRIPFEDRTGECLKRTGAS) the chain is Cytoplasmic. The chain crosses the membrane as a helical span at residues 534–554 (VALTSISNVTAFFMAALIPIP). The Extracellular portion of the chain corresponds to 555 to 563 (ALRAFSLQA). Residues 564 to 584 (AVVVVFNFAMVLLIFPAILSM) traverse the membrane as a helical segment. Over 585 to 734 (DLYRREDRRL…HYAPFLLKPK (150 aa)) the chain is Cytoplasmic. The helical transmembrane segment at 735–755 (AKVVVILLFLGLLGVSLYGTT) threads the bilayer. Residues 756 to 1013 (RVRDGLDLTD…WEQYISLRHW (258 aa)) are Extracellular-facing. Asn-861 and Asn-986 each carry an N-linked (GlcNAc...) asparagine glycan. Residues 1014–1034 (LLLSISVVLACTFLVCAVFLL) traverse the membrane as a helical segment. Residues 1035–1039 (NPWTA) lie on the Cytoplasmic side of the membrane. Residues 1040-1060 (GIIVMVLALMTVELFGMMGLI) traverse the membrane as a helical segment. The Extracellular portion of the chain corresponds to 1061-1069 (GIKLSAVPV). Residues 1070–1090 (VILIASVGIGVEFTVHVALAF) form a helical membrane-spanning segment. Residues 1091–1107 (LTAIGDKNHRAMLALEH) lie on the Cytoplasmic side of the membrane. Residues 1108-1128 (MFAPVLDGAVSTLLGVLMLAG) traverse the membrane as a helical segment. Topologically, residues 1129 to 1140 (SEFDFIVRYFFA) are extracellular. Residues 1141–1161 (VLAILTVLGVLNGLVLLPVLL) form a helical membrane-spanning segment. Residues 1162 to 1434 (SFFGPCPEVS…EERPWGSSSN (273 aa)) are Cytoplasmic-facing. Disordered regions lie at residues 1175 to 1219 (GLNR…TVSG), 1257 to 1348 (HPDS…SSVP), and 1368 to 1396 (HPPP…HGVF). The residue at position 1181 (Thr-1181) is a Phosphothreonine. A Phosphoserine modification is found at Ser-1183. The span at 1204–1213 (SDSSDSEYSS) shows a compositional bias: low complexity. Positions 1288 to 1297 (PRRDPPREGL) are enriched in basic and acidic residues. The segment covering 1335-1348 (PRNPTSTAMGSSVP) has biased composition (polar residues). Lys-1413 participates in a covalent cross-link: Glycyl lysine isopeptide (Lys-Gly) (interchain with G-Cter in ubiquitin).

Belongs to the patched family. Interacts with SNX17. Interacts with IHH. Interacts with G-protein coupled receptor GPR37L1. Post-translationally, glycosylation is necessary for SHH binding. In terms of processing, in the absence of Hh ligands, ubiquitination by ITCH at Lys-1413 promotes endocytosis and both proteasomal and lysosomal degradation. In terms of tissue distribution, detected in cerebellar Bergmann glia cells (at protein level). In the developing embryo, first detected within the ventral neural tube and later in the somites and limb buds. Expression in the limb buds is restricted to the posterior ectoderm surrounding the zone of polarizing activity. In the adult, expression is seen in brain, lung, liver, kidney and ocular tissues; lower levels in heart, skeletal muscle, and testis.

The protein resides in the cell membrane. Functionally, acts as a receptor for sonic hedgehog (SHH), indian hedgehog (IHH) and desert hedgehog (DHH). Associates with the smoothened protein (SMO) to transduce the hedgehog's proteins signal. Seems to have a tumor suppressor function, as inactivation of this protein is probably a necessary, if not sufficient step for tumorigenesis. The polypeptide is Protein patched homolog 1 (Ptch1) (Mus musculus (Mouse)).